Reading from the N-terminus, the 337-residue chain is Nodulation protein D 2 (337 aa).

Residues 6 to 63 enclose the HTH lysR-type domain; sequence LDLNLLVVLDSLMTARNLTAAARSINLSQPAMSAAVARLRAYFGDELFTMRGRTLVPT. A DNA-binding region (H-T-H motif) is located at residues 23 to 42; it reads LTAAARSINLSQPAMSAAVA.

It belongs to the LysR transcriptional regulatory family.

Functionally, nodD regulates the expression of the nodABCFE genes which encode other nodulation proteins. NodD is also a negative regulator of its own expression. Binds flavonoids as inducers. The protein is Nodulation protein D 2 (nodD2) of Bradyrhizobium sp. (strain NC92).